A 368-amino-acid chain; its full sequence is Type 2 DNA topoisomerase 6 subunit A (368 aa).

The 140-residue stretch at 9-148 (TEDEIARERL…FHMRPEESGA (140 aa)) folds into the Topo IIA-type catalytic domain. Tyrosine 103 (O-(5'-phospho-DNA)-tyrosine intermediate) is an active-site residue. Glutamate 201 and aspartate 253 together coordinate Mg(2+).

This sequence belongs to the TOP6A family. In terms of assembly, homodimer. Heterotetramer of two Top6A and two Top6B chains. Requires Mg(2+) as cofactor.

The enzyme catalyses ATP-dependent breakage, passage and rejoining of double-stranded DNA.. Its function is as follows. Relaxes both positive and negative superturns and exhibits a strong decatenase activity. The polypeptide is Type 2 DNA topoisomerase 6 subunit A (Natronomonas pharaonis (strain ATCC 35678 / DSM 2160 / CIP 103997 / JCM 8858 / NBRC 14720 / NCIMB 2260 / Gabara) (Halobacterium pharaonis)).